We begin with the raw amino-acid sequence, 86 residues long: Progonadoliberin-2 (86 aa).

Residues 1–24 form the signal peptide; that stretch reads MVSVARLVFMLGPLLCLGAQLSSS. At Gln25 the chain carries Pyrrolidone carboxylic acid. Residue Gly34 is modified to Glycine amide.

The protein belongs to the GnRH family.

The protein resides in the secreted. Stimulates the secretion of gonadotropins. This is Progonadoliberin-2 (gnrh2) from Oncorhynchus mykiss (Rainbow trout).